The chain runs to 568 residues: Protein phosphatase 1 regulatory inhibitor subunit 16B (568 aa).

Residues 15–55 (EKVPTLERLRAAQKRRAQQLKKWAQYEQDLLHRKRKHERKR) adopt a coiled-coil conformation. A Phosphoserine modification is found at serine 69. ANK repeat units lie at residues 100 to 129 (DGLTALHQCCIDNFEEIVKLLLSHGANVNA), 133 to 162 (ELWTPLHAAATCGHINLVKILVQYGADLLA), 228 to 257 (QGATLLHIAGANGYLRAAELLLDHGVRVDV), and 261 to 290 (DGWEPLHAAAFWGQMPMAELLVSHGASLSA). Serine 333, serine 337, and serine 350 each carry phosphoserine. The segment at 373-403 (SAAEDQRTSTYNGDIRETRTDQENKDPNPRL) is disordered. The span at 386–403 (DIRETRTDQENKDPNPRL) shows a compositional bias: basic and acidic residues. A Phosphoserine modification is found at serine 477. Residues 505 to 517 (SSVARSGESSSEG) show a composition bias toward low complexity. Positions 505–527 (SSVARSGESSSEGKAPLIGGRTS) are disordered. The ANK 5 repeat unit spans residues 531-560 (SNGTSVYYTVTSGDPPLLKFKAPMEEMEEK). A lipid anchor (S-palmitoyl cysteine) is attached at cysteine 564. Cysteine methyl ester is present on cysteine 565. Residue cysteine 565 is the site of S-farnesyl cysteine attachment. A propeptide spans 566–568 (RIS) (removed in mature form).

As to quaternary structure, interacts with PPP1CA, PPP1CB and MSN. Interacts (via its fourth ankyrin repeat) with the mature dimeric form of RPSA/LAMR1. Interacts with EEF1A1. Interacts with PTEN. Interacts with ECE1. In terms of processing, phosphorylated by PKA and, after PKA priming, by GSK3B. Phosphorylation by GSK3B reduces its association with PP1C and enhances PP1C activity. Dephosphorylation by its associated PP1C results in enhanced association with PP1C, but reduced PP1C activity.

It is found in the cell membrane. The protein resides in the nucleus. It localises to the cell projection. Functionally, regulator of protein phosphatase 1 (PP1) that acts as a positive regulator of pulmonary endothelial cell (EC) barrier function. Protects the endothelial barrier from lipopolysaccharide (LPS)-induced vascular leakage. Involved in the regulation of the PI3K/AKT signaling pathway. Involved in the regulation of angiogenesis and endothelial cell proliferation through the control of ECE1 dephosphorylation, trafficking and activity. Involved in the regulation of endothelial cell filopodia extension. May be a downstream target for TGF-beta1 signaling cascade in endothelial cells. Involved in PKA-mediated moesin dephosphorylation which is important in EC barrier protection against thrombin stimulation. Promotes the interaction of PPP1CA with RPSA/LAMR1 and in turn facilitates the dephosphorylation of RPSA/LAMR1. Involved in the dephosphorylation of EEF1A1. This chain is Protein phosphatase 1 regulatory inhibitor subunit 16B (Ppp1r16b), found in Mus musculus (Mouse).